A 624-amino-acid chain; its full sequence is Leucine-rich repeat, immunoglobulin-like domain and transmembrane domain-containing protein 1 (624 aa).

A signal peptide spans 1–21 (MWVALGMLWLLALGGPHQAWG). In terms of domain architecture, LRRNT spans 22-59 (FCPSECSCSLRILSDGSKARTVVCSDPDLTLPPASIPP). Over 22–527 (FCPSECSCSL…EVVDAEGTQR (506 aa)) the chain is Lumenal. LRR repeat units lie at residues 60 to 81 (DTCKLRLERTAIRRVPGETFRP), 84 to 105 (RLEQLWLPYNALSELSALMLRG), 108 to 129 (RLRELRLPGNRLVTFPWAALRD), 132 to 153 (QLQLLDLQANRLSTLPPEAAHF), and 156 to 177 (NLTFLDLSNNQLMRLPEELLDV). Asparagine 156 carries an N-linked (GlcNAc...) asparagine glycan. In terms of domain architecture, LRRCT spans 201-254 (NPWVCDCRLYDLVHLLDGWVSSNLIFIEARLRCASPRSLAGVAFSQLELRKCQS). The 70-residue stretch at 267–336 (PLGSTVLLRC…YICQAKNFLG (70 aa)) folds into the Ig-like C2-type domain. A disulfide bridge connects residues cysteine 276 and cysteine 329. Residues asparagine 297 and asparagine 456 are each glycosylated (N-linked (GlcNAc...) asparagine). Residues 431-519 (MVRSLKVVGD…QCVIFSTDEV (89 aa)) form the Fibronectin type-III domain. The LRR 6 repeat unit spans residues 526–549 (QRLINMVVISVAAIIALPPTLLVC). The chain crosses the membrane as a helical span at residues 528-548 (LINMVVISVAAIIALPPTLLV). Residues 549–624 (CCGALRRRCH…GGRRINEYFC (76 aa)) are Cytoplasmic-facing.

As to quaternary structure, may form a homodimer. Interacts with LRIT2; may form a heterodimer with LRIT2. Interacts (via its N-terminal extracellular domain) with metabotropic glutamate receptor GRM6. Interacts (via its extreme C-terminus) with the scaffold protein FRMPD2 (via the third PDZ domain); the interaction leads to their colocalization in photoreceptor synapses. In terms of tissue distribution, expressed predominantly in developing photoreceptor and bipolar cells.

It localises to the endoplasmic reticulum membrane. Its subcellular location is the cell projection. The protein localises to the dendrite. Photoreceptor synaptic protein essential for normal vision. Involved in synapse formation in cone photoreceptor cells. The sequence is that of Leucine-rich repeat, immunoglobulin-like domain and transmembrane domain-containing protein 1 (Lrit1) from Mus musculus (Mouse).